The chain runs to 351 residues: MAASRSRRNNAGNKIAHLLNEEEEDDFYKTSYGGFQEDEEDKEYEQKDEEEDVVDSDFSIDENDEPVSDQEEAPEKKRKRGVVNTKAYKETKPAVKKETKATPALHKKRPGGGVTKRRPRPRFTVLDSGRKSIRTSTAIKTQATKIRLKELDDARKRKKKKVRVEDYMPTQEELLEEAKITEEENTKSLEKFQKMELEKKKSRPTKRTFSGPTIRYHSLTMPAMRKPTRGANPAVDSKDLAGKCERTFVTIENDFNDKVFQSLFRHKAPPKASNGICPITRLPARYFDPITQQPYYSIQAFKILREAYYMQLEQQGGGSEQPELAKWLEWRKLVKENRLKASAAASKNGDN.

The disordered stretch occupies residues 1 to 136 (MAASRSRRNN…DSGRKSIRTS (136 aa)). The span at 36-72 (QEDEEDKEYEQKDEEEDVVDSDFSIDENDEPVSDQEE) shows a compositional bias: acidic residues. A phosphoserine mark is found at Ser56, Ser59, and Ser68. Positions 87 to 100 (AYKETKPAVKKETK) are enriched in basic and acidic residues. Residues 105 to 121 (LHKKRPGGGVTKRRPRP) are compositionally biased toward basic residues. The stretch at 142-202 (QATKIRLKEL…QKMELEKKKS (61 aa)) forms a coiled coil. The DNA-binding element occupies 156 to 208 (KRKKKKVRVEDYMPTQEELLEEAKITEEENTKSLEKFQKMELEKKKSRPTKRT).

Belongs to the VPS72/YL1 family. Interacts with H2AV. Component of the Tip60 chromatin-remodeling complex which contains the catalytic subunit Tip60 and the subunits Domino, Tra1, Brd8, E(Pc), DMAP1, Pontin, Reptin, Ing3, Act87E, BAP55, Mrg15, MrgBP, Gas41 and YL-1.

It localises to the nucleus. Part of the Tip60 chromatin-remodeling complex which is involved in DNA repair. Upon induction of DNA double-strand breaks, this complex acetylates phosphorylated H2AV in nucleosomes and exchanges it with unmodified H2AV. This is Vacuolar protein sorting-associated protein 72 homolog (YL-1) from Drosophila melanogaster (Fruit fly).